The following is a 346-amino-acid chain: tRNA N6-adenosine threonylcarbamoyltransferase (346 aa).

Fe cation-binding residues include H111 and H115. Substrate contacts are provided by residues L134–G138, D167, G180, D184, and N279. A Fe cation-binding site is contributed by D307.

It belongs to the KAE1 / TsaD family. Fe(2+) serves as cofactor.

The protein resides in the cytoplasm. The catalysed reaction is L-threonylcarbamoyladenylate + adenosine(37) in tRNA = N(6)-L-threonylcarbamoyladenosine(37) in tRNA + AMP + H(+). Its function is as follows. Required for the formation of a threonylcarbamoyl group on adenosine at position 37 (t(6)A37) in tRNAs that read codons beginning with adenine. Is involved in the transfer of the threonylcarbamoyl moiety of threonylcarbamoyl-AMP (TC-AMP) to the N6 group of A37, together with TsaE and TsaB. TsaD likely plays a direct catalytic role in this reaction. This is tRNA N6-adenosine threonylcarbamoyltransferase from Trichormus variabilis (strain ATCC 29413 / PCC 7937) (Anabaena variabilis).